The primary structure comprises 164 residues: CASP-like protein 1C2 (164 aa).

The Cytoplasmic segment spans residues 1–8 (MAVELKKV). A helical transmembrane segment spans residues 9–29 (FSTILRFLALAATVVAVIVMI). Residues 30 to 53 (RSHDSAIVLNLTFSAKYNNTPAFK) lie on the Extracellular side of the membrane. N-linked (GlcNAc...) asparagine glycosylation is present at asparagine 39. A helical transmembrane segment spans residues 54-74 (YFVIAEGIASVYTIIVIFLWS). At 75 to 80 (KGLLGR) the chain is on the cytoplasmic side. The helical transmembrane segment at 81–101 (LIVILDMVTTVLLTSSISAAL) threads the bilayer. The Extracellular portion of the chain corresponds to 102–129 (AIAQVGKKGNSHAGWLPVCGQVPKFCDQ). Residues 130–150 (AIIALVAGFVAAIVYFMLLLC) form a helical membrane-spanning segment. The Cytoplasmic portion of the chain corresponds to 151–164 (SLHAVLTPIFAVKP).

The protein belongs to the Casparian strip membrane proteins (CASP) family. In terms of assembly, homodimer and heterodimers.

It is found in the cell membrane. The polypeptide is CASP-like protein 1C2 (Ricinus communis (Castor bean)).